Here is a 446-residue protein sequence, read N- to C-terminus: ATP synthase subunit b-delta (446 aa).

Positions 1-168 are ATP synthase subunit b; sequence MSTFIGQLVG…PKGADVEYPL (168 aa). Residues 4 to 24 form a helical membrane-spanning segment; that stretch reads FIGQLVGFAAIVYLVWWYVVP. The tract at residues 169–446 is ATP synthase subunit delta; sequence LAKMRSASRR…LVAAEAALPD (278 aa).

In the N-terminal section; belongs to the ATPase B chain family. The protein in the C-terminal section; belongs to the ATPase delta chain family. As to quaternary structure, F-type ATPases have 2 components, F(1) - the catalytic core - and F(0) - the membrane proton channel. F(1) has five subunits: alpha(3), beta(3), gamma(1), delta(1), epsilon(1). F(0) has three main subunits: a(1), b(2) and c(10-14). The alpha and beta chains form an alternating ring which encloses part of the gamma chain. F(1) is attached to F(0) by a central stalk formed by the gamma and epsilon chains, while a peripheral stalk is formed by the delta and b chains.

The protein resides in the cell membrane. F(1)F(0) ATP synthase produces ATP from ADP in the presence of a proton or sodium gradient. F-type ATPases consist of two structural domains, F(1) containing the extramembraneous catalytic core and F(0) containing the membrane proton channel, linked together by a central stalk and a peripheral stalk. During catalysis, ATP synthesis in the catalytic domain of F(1) is coupled via a rotary mechanism of the central stalk subunits to proton translocation. Its function is as follows. This fusion protein includes a component of the F(0) channel (subunit b) and of the F(1) subunit (subunit delta). Two copies of subunit b and one of delta together form the peripheral 'stator' stalk which links F(1) to F(0). The chain is ATP synthase subunit b-delta (atpFH) from Mycobacterium leprae (strain Br4923).